The following is a 419-amino-acid chain: Putative competence-damage inducible protein (419 aa).

This sequence belongs to the CinA family.

The chain is Putative competence-damage inducible protein from Streptococcus agalactiae serotype III (strain NEM316).